Consider the following 287-residue polypeptide: Fructose-1,6-bisphosphatase class 1 (287 aa).

Mg(2+)-binding residues include Glu-67, Asp-87, Leu-89, and Asp-90. Substrate is bound by residues 90–93, Tyr-195, and Lys-225; that span reads DGSS. Glu-231 is a Mg(2+) binding site.

It belongs to the FBPase class 1 family. As to quaternary structure, homotetramer. Requires Mg(2+) as cofactor.

The protein localises to the cytoplasm. It carries out the reaction beta-D-fructose 1,6-bisphosphate + H2O = beta-D-fructose 6-phosphate + phosphate. It participates in carbohydrate biosynthesis; gluconeogenesis. The sequence is that of Fructose-1,6-bisphosphatase class 1 from Halobacterium salinarum (strain ATCC 29341 / DSM 671 / R1).